The primary structure comprises 210 residues: Imidazole glycerol phosphate synthase subunit HisH 1 (210 aa).

Positions K3–V210 constitute a Glutamine amidotransferase type-1 domain. The active-site Nucleophile is the C82. Active-site residues include H189 and E191.

As to quaternary structure, heterodimer of HisH and HisF.

It localises to the cytoplasm. The enzyme catalyses 5-[(5-phospho-1-deoxy-D-ribulos-1-ylimino)methylamino]-1-(5-phospho-beta-D-ribosyl)imidazole-4-carboxamide + L-glutamine = D-erythro-1-(imidazol-4-yl)glycerol 3-phosphate + 5-amino-1-(5-phospho-beta-D-ribosyl)imidazole-4-carboxamide + L-glutamate + H(+). It carries out the reaction L-glutamine + H2O = L-glutamate + NH4(+). Its pathway is amino-acid biosynthesis; L-histidine biosynthesis; L-histidine from 5-phospho-alpha-D-ribose 1-diphosphate: step 5/9. Its function is as follows. IGPS catalyzes the conversion of PRFAR and glutamine to IGP, AICAR and glutamate. The HisH subunit provides the glutamine amidotransferase activity that produces the ammonia necessary to HisF for the synthesis of IGP and AICAR. The protein is Imidazole glycerol phosphate synthase subunit HisH 1 (hisH1) of Parasynechococcus marenigrum (strain WH8102).